The sequence spans 251 residues: Ditrans,polycis-undecaprenyl-diphosphate synthase ((2E,6E)-farnesyl-diphosphate specific) (251 aa).

The active site involves aspartate 21. A Mg(2+)-binding site is contributed by aspartate 21. Substrate is bound by residues 22-25, tryptophan 26, histidine 38, and 66-68; these read GNNR and SSE. Asparagine 69 (proton acceptor) is an active-site residue. Substrate is bound by residues tryptophan 70, arginine 72, arginine 189, and 195-197; that span reads RIS. Glutamate 208 lines the Mg(2+) pocket.

It belongs to the UPP synthase family. Homodimer. The cofactor is Mg(2+).

It catalyses the reaction 8 isopentenyl diphosphate + (2E,6E)-farnesyl diphosphate = di-trans,octa-cis-undecaprenyl diphosphate + 8 diphosphate. Its function is as follows. Catalyzes the sequential condensation of isopentenyl diphosphate (IPP) with (2E,6E)-farnesyl diphosphate (E,E-FPP) to yield (2Z,6Z,10Z,14Z,18Z,22Z,26Z,30Z,34E,38E)-undecaprenyl diphosphate (di-trans,octa-cis-UPP). UPP is the precursor of glycosyl carrier lipid in the biosynthesis of bacterial cell wall polysaccharide components such as peptidoglycan and lipopolysaccharide. This is Ditrans,polycis-undecaprenyl-diphosphate synthase ((2E,6E)-farnesyl-diphosphate specific) from Pseudomonas syringae pv. tomato (strain ATCC BAA-871 / DC3000).